The primary structure comprises 252 residues: NAC domain-containing protein 23 (252 aa).

An NAC domain is found at 12-177 (MPPGFRFQPT…EMVLCRISNK (166 aa)). Residues 110 to 183 (TAVKRRFVFY…ISNKDLPKPP (74 aa)) mediate DNA binding. The segment at 225–252 (VDDAAAADDDPGDLDEEIDDSMQRNHGG) is disordered. Over residues 229–244 (AAADDDPGDLDEEIDD) the composition is skewed to acidic residues.

In terms of assembly, forms heterodimers with NAC26. Expressed in stems and panicles. Expressed in developing seeds.

It is found in the nucleus. The protein localises to the cytoplasm. Functionally, transcription factor involved in the regulation of seed size. Possesses transactivation activity in yeast. This is NAC domain-containing protein 23 from Oryza sativa subsp. indica (Rice).